Here is a 374-residue protein sequence, read N- to C-terminus: tRNA (guanine(26)-N(2))-dimethyltransferase (374 aa).

Residues 1–367 form the Trm1 methyltransferase domain; it reads MILKEGEVVF…ATLKNVIEAI (367 aa). S-adenosyl-L-methionine is bound by residues R34, R66, D86, D113, and A114.

Belongs to the class I-like SAM-binding methyltransferase superfamily. Trm1 family.

The enzyme catalyses guanosine(26) in tRNA + 2 S-adenosyl-L-methionine = N(2)-dimethylguanosine(26) in tRNA + 2 S-adenosyl-L-homocysteine + 2 H(+). Its function is as follows. Dimethylates a single guanine residue at position 26 of a number of tRNAs using S-adenosyl-L-methionine as donor of the methyl groups. This Methanocaldococcus jannaschii (strain ATCC 43067 / DSM 2661 / JAL-1 / JCM 10045 / NBRC 100440) (Methanococcus jannaschii) protein is tRNA (guanine(26)-N(2))-dimethyltransferase.